The chain runs to 171 residues: AP-3 complex subunit sigma (171 aa).

The protein belongs to the adaptor complexes small subunit family. As to quaternary structure, adaptor protein complex 3 (AP-3) is a heterotetramer composed of two large adaptins (delta-type subunit and beta-type subunit), a medium adaptin (mu-type subunit) and a small adaptin (sigma-type subunit).

The protein localises to the endosome membrane. Functionally, part of the AP-3 complex, an adaptor-related complex which is essential for the compartmentalization of the endocytic pathway. The polypeptide is AP-3 complex subunit sigma (ap3s1) (Dictyostelium discoideum (Social amoeba)).